We begin with the raw amino-acid sequence, 239 residues long: 1-(5-phosphoribosyl)-5-[(5-phosphoribosylamino)methylideneamino] imidazole-4-carboxamide isomerase (239 aa).

Catalysis depends on aspartate 8, which acts as the Proton acceptor. The Proton donor role is filled by aspartate 129.

It belongs to the HisA/HisF family.

It is found in the cytoplasm. The enzyme catalyses 1-(5-phospho-beta-D-ribosyl)-5-[(5-phospho-beta-D-ribosylamino)methylideneamino]imidazole-4-carboxamide = 5-[(5-phospho-1-deoxy-D-ribulos-1-ylimino)methylamino]-1-(5-phospho-beta-D-ribosyl)imidazole-4-carboxamide. The protein operates within amino-acid biosynthesis; L-histidine biosynthesis; L-histidine from 5-phospho-alpha-D-ribose 1-diphosphate: step 4/9. This chain is 1-(5-phosphoribosyl)-5-[(5-phosphoribosylamino)methylideneamino] imidazole-4-carboxamide isomerase, found in Roseobacter denitrificans (strain ATCC 33942 / OCh 114) (Erythrobacter sp. (strain OCh 114)).